A 549-amino-acid polypeptide reads, in one-letter code: Hydroxylamine reductase (549 aa).

[4Fe-4S] cluster-binding residues include C5, C8, C17, and C23. Residues H250, E274, C318, C404, C432, C457, E491, and K493 each contribute to the hybrid [4Fe-2O-2S] cluster site. C404 carries the post-translational modification Cysteine persulfide.

Belongs to the HCP family. The cofactor is [4Fe-4S] cluster. Hybrid [4Fe-2O-2S] cluster serves as cofactor.

The protein resides in the cytoplasm. The catalysed reaction is A + NH4(+) + H2O = hydroxylamine + AH2 + H(+). In terms of biological role, catalyzes the reduction of hydroxylamine to form NH(3) and H(2)O. The protein is Hydroxylamine reductase of Geobacter metallireducens (strain ATCC 53774 / DSM 7210 / GS-15).